Reading from the N-terminus, the 430-residue chain is MAANWEKVENNQGVLTIEVDATQVDAALDQAFKKVVQKVQVPGFRKGKVPRKMFESRFGVESLYQDALDILLPTAYGQAVREAGIEPVDRPEVDVTQMEQGKNLIFKATVTVKPEVKLGDYKGLSIEEKDFSVTEESVDAELKRMQERHAELVAVEEGAAQTGDIAVIDFEGFQDGVAFEGGKAEDYSLELGSGTFIAGFEEQLAGLNIGEEKEITVTFPEEYHSPNLAGKEAVFKVKLNSLKRKNMPVLDDEFAKDVSEFDTLEELKADTKKKLEEKTAQEKDQYVREQLVLKAAENAEIDLPAVMVEHELDQMVNEFGQRLQYQGMTLELYYQFSGMDESQLRDQLRADATSRVRTSLTLEAIGKAENIEATEEDVNAELDKLAGVYGRPADELRKIFSAQDGMAALYRDVQTRKTVDLLVAESKVTA.

The region spanning 163-248 is the PPIase FKBP-type domain; sequence GDIAVIDFEG…LNSLKRKNMP (86 aa).

Belongs to the FKBP-type PPIase family. Tig subfamily.

It localises to the cytoplasm. The enzyme catalyses [protein]-peptidylproline (omega=180) = [protein]-peptidylproline (omega=0). Functionally, involved in protein export. Acts as a chaperone by maintaining the newly synthesized protein in an open conformation. Functions as a peptidyl-prolyl cis-trans isomerase. In Brevibacillus brevis (strain 47 / JCM 6285 / NBRC 100599), this protein is Trigger factor.